The primary structure comprises 168 residues: ATP synthase subunit b, sodium ion specific (168 aa).

Residues 9–29 (VSIDINMFWQIINFLILMFFF) traverse the membrane as a helical segment.

This sequence belongs to the ATPase B chain family. F-type ATPases have 2 components, F(1) - the catalytic core - and F(0) - the membrane proton channel. F(1) has five subunits: alpha(3), beta(3), gamma(1), delta(1), epsilon(1). F(0) has three main subunits: a(1), b(2) and c(10-14). The alpha and beta chains form an alternating ring which encloses part of the gamma chain. F(1) is attached to F(0) by a central stalk formed by the gamma and epsilon chains, while a peripheral stalk is formed by the delta and b chains.

The protein localises to the cell inner membrane. F(1)F(0) ATP synthase produces ATP from ADP in the presence of a proton or sodium gradient. F-type ATPases consist of two structural domains, F(1) containing the extramembraneous catalytic core and F(0) containing the membrane proton channel, linked together by a central stalk and a peripheral stalk. During catalysis, ATP synthesis in the catalytic domain of F(1) is coupled via a rotary mechanism of the central stalk subunits to proton translocation. Functionally, component of the F(0) channel, it forms part of the peripheral stalk, linking F(1) to F(0). The protein is ATP synthase subunit b, sodium ion specific (atpF) of Propionigenium modestum.